A 406-amino-acid polypeptide reads, in one-letter code: Succinylornithine transaminase (406 aa).

Position 252 is an N6-(pyridoxal phosphate)lysine (Lys252).

This sequence belongs to the class-III pyridoxal-phosphate-dependent aminotransferase family. AstC subfamily. Pyridoxal 5'-phosphate is required as a cofactor.

It catalyses the reaction N(2)-succinyl-L-ornithine + 2-oxoglutarate = N-succinyl-L-glutamate 5-semialdehyde + L-glutamate. It participates in amino-acid degradation; L-arginine degradation via AST pathway; L-glutamate and succinate from L-arginine: step 3/5. Catalyzes the transamination of N(2)-succinylornithine and alpha-ketoglutarate into N(2)-succinylglutamate semialdehyde and glutamate. Can also act as an acetylornithine aminotransferase. The chain is Succinylornithine transaminase from Escherichia coli (strain 55989 / EAEC).